The sequence spans 305 residues: Phosphoribosylaminoimidazole-succinocarboxamide synthase (305 aa).

The protein belongs to the SAICAR synthetase family.

The enzyme catalyses 5-amino-1-(5-phospho-D-ribosyl)imidazole-4-carboxylate + L-aspartate + ATP = (2S)-2-[5-amino-1-(5-phospho-beta-D-ribosyl)imidazole-4-carboxamido]succinate + ADP + phosphate + 2 H(+). Its pathway is purine metabolism; IMP biosynthesis via de novo pathway; 5-amino-1-(5-phospho-D-ribosyl)imidazole-4-carboxamide from 5-amino-1-(5-phospho-D-ribosyl)imidazole-4-carboxylate: step 1/2. In Albidiferax ferrireducens (strain ATCC BAA-621 / DSM 15236 / T118) (Rhodoferax ferrireducens), this protein is Phosphoribosylaminoimidazole-succinocarboxamide synthase.